We begin with the raw amino-acid sequence, 533 residues long: MNDFWQHCSALLERELTPQQYVTWIKPLAPVAFDAAANTLSIAAPNRFKLDWVKSQFSGRISDLARDFWNAPIEVQFVLDPKAGQRSPAGATPLAPRAPLPSANPAPVAPGPASAPAVDAHAPAPAGMNAATAAAVAAAQAAQAAQANAAALNADEAADLDLPSLTAHEAAAGRRTWRPGAANANSEAADSMYERSKLNPVLTFDNFVTGKANQLARAAAIQVADNPGISYNPLFLYGGVGLGKTHLIHAIGNQLLLDKPGARIRYIHAEQYVSDVVKAYQRKAFDDFKRYYHSLDLLLIDDIQFFSGKSRTQEEFFYAFEALVANKAQVIITSDTYPKEISGIDDRLISRFDSGLTVAIEPPELEMRVAILMRKAQSEGVSLSEDVAFFVAKHLRSNVRELEGALRKILAYSKFHGREITIELTKEALKDLLTVQNRQISVENIQKTVADFYNIKVADMYSKKRPANIARPRQIAMYLAKELTQKSLPEIGELFGGRDHTTVLHAVRKIADERGKDAQLNHELHVLEQTLKG.

The domain I, interacts with DnaA modulators stretch occupies residues 1-72 (MNDFWQHCSA…DLARDFWNAP (72 aa)). Residues 72-196 (PIEVQFVLDP…EAADSMYERS (125 aa)) are domain II. The disordered stretch occupies residues 83–120 (AGQRSPAGATPLAPRAPLPSANPAPVAPGPASAPAVDA). Residues 96–110 (PRAPLPSANPAPVAP) show a composition bias toward pro residues. The segment covering 111 to 120 (GPASAPAVDA) has biased composition (low complexity). A domain III, AAA+ region region spans residues 197–413 (KLNPVLTFDN…GALRKILAYS (217 aa)). ATP contacts are provided by Gly-241, Gly-243, Lys-244, and Thr-245. The segment at 414 to 533 (KFHGREITIE…LHVLEQTLKG (120 aa)) is domain IV, binds dsDNA.

Belongs to the DnaA family. As to quaternary structure, oligomerizes as a right-handed, spiral filament on DNA at oriC.

It localises to the cytoplasm. Plays an essential role in the initiation and regulation of chromosomal replication. ATP-DnaA binds to the origin of replication (oriC) to initiate formation of the DNA replication initiation complex once per cell cycle. Binds the DnaA box (a 9 base pair repeat at the origin) and separates the double-stranded (ds)DNA. Forms a right-handed helical filament on oriC DNA; dsDNA binds to the exterior of the filament while single-stranded (ss)DNA is stabiized in the filament's interior. The ATP-DnaA-oriC complex binds and stabilizes one strand of the AT-rich DNA unwinding element (DUE), permitting loading of DNA polymerase. After initiation quickly degrades to an ADP-DnaA complex that is not apt for DNA replication. Binds acidic phospholipids. This chain is Chromosomal replication initiator protein DnaA, found in Burkholderia pseudomallei (strain 1710b).